The primary structure comprises 221 residues: Urease accessory protein UreE (221 aa).

A compositionally biased stretch (basic and acidic residues) spans 171-180; the sequence is HHGHDHDHGH. The segment at 171 to 221 is disordered; it reads HHGHDHDHGHSHSHSHSHSHSHSHSHDHDHDHDHEHDVKGHVHGPGCGHKH. A compositionally biased stretch (basic residues) spans 181 to 193; it reads SHSHSHSHSHSHS. Positions 194–210 are enriched in basic and acidic residues; the sequence is HSHDHDHDHDHEHDVKG.

It belongs to the UreE family.

The protein resides in the cytoplasm. Involved in urease metallocenter assembly. Binds nickel. Probably functions as a nickel donor during metallocenter assembly. This chain is Urease accessory protein UreE, found in Cupriavidus pinatubonensis (strain JMP 134 / LMG 1197) (Cupriavidus necator (strain JMP 134)).